A 1883-amino-acid chain; its full sequence is MSQALNESANSIGSDEQDDTREEANGTDHSGSGSGSGSSGSDSDSDSSSGNSSDGRSSPEPEDKSLSVAGFPPTAAAAQADSKTNGFTDDQEDSSSDGSSGSDSDSDAEGPSDQRNQSINNANTSSSLPKPEQNEEEDNETEAGQQQPASDASADESSDSSANVSPTSSSSSSEEEEEDYRPKRTRQARKPPTAAEKSKKAPAPKNKKKTWDSDESDESEDSDDEVSTAQKRKPAATTSRSKLAQQQQRRRVKPFSSEDSDDDDASKRCATRRKGAAVSYKEASEDEATDSEDLLEFEYDESQAATTAATAEEEEKCETIERILAQRAGKRGCTGNQTTIYAIEENGFDPHAGFDEKQTPDAETEAQFLIKWKGWSYIHNTWESEATLRDMKAKGMKKLDNFIKKEKEQAYWRRYAGPEDIDYFECQLELQHELLKSYNNVDRIIAKGSKPDDGTEEYLCKWQSLPYAESTWEDAALVLRKWQRCAEQFNDRESSKCTPSRHCRVIKYRPKFSRIKNQPEFLSSGLTLRDYQMDGLNWLLHSWCKENSVILADEMGLGKTIQTICFLYSLFKIHHLYGPFLCVVPLSTMTAWQREFDLWAPDMNVVTYLGDIKSRELIQQYEWQFESSKRLKFNCILTTYEIVLKDKQFLGTLQWAALLVDEAHRLKNDDSLLYKSLKEFDTNHRLLITGTPLQNSLKELWALLHFIMPDKFDTWENFEVQHGNAEDKGYTRLHQQLEPYILRRVKKDVEKSLPAKVEQILRVEMTSLQKQYYKWILTKNFDALRKGKRGSTSTFLNIVIELKKCCNHAALIRPSEFELMGLQQDEALQTLLKGSGKLVLLDKLLCRLKETGHRVLIFSQMVRMLDVLADYLQKRHFPFQRLDGSIKGEMRRQALDHFNAEGSQDFCFLLSTRAGGLGINLATADTVIIFDSDWNPQNDLQAQARAHRIGQKNQVNIYRLVTARSVEEQIVERAKQKMVLDHLVIQRMDTTGRTVLDKSGNGHSSNSNPFNKDDLSAILKFGAEELFKDEQEHDDDLVCDIDEILRRAETRNEDPEMPADDLLSAFKVASIAAFEEEPSDSVSKQDQNAAGEEDDSKDWDDIIPEGFRKAIDDQERAKEMEDLYLPPRRKTAANQNEGKRGAGKGGKGKQQADDSGGDSDYELGSDGSGDDGRPRKRGRPTMKEKITGFTDAELRRFIRSYKKFPAPLHRMEAIACDAELQEKPLAELKRLGEMLHDRCVQFLHEHKEEESKTAATDETPGAKQRRARATFSVKLGGVSFNAKKLLACEQELQPLNEIMPSMPEERQQWSFNIKTRAPVFDVDWGIEEDTKLLCGIYQYGIGSWEQMKLDPTLKLTDKILLNDTRKPQAKQLQTRAEYLLKIIKKNVELTKGGQRRQRRPRASRANDAKAASQSASSTIDAKPHDGEDAAGDARTVAESSNSQVDPSTASPHNAPATEQHGDPAKKAKKSKARSKKTSASDNNGNKPMHFTANNEPRALEVLGDLDPSIFNECKEKMRPVKKALKALDQPDVSLSDQDQLQHTRDCLLQIGKQIDVCLNPYAETEKKEWRSNLWYFVSKFTELDAKRLFKIYKHALKQKAGGDGEAKGKDKGSSGSPAKSKPNGVTTEEKEKERDRSGGKKKKKDKDKERSGQARYPETGIPTSGRYADPPLKRKRDENDADASSGLAGAPGGGIGDNLKSMSFKRLNMDRHEDRKKHHRGPDYYGGSGPPMGSGSYEGGSNSRRQGPTSPSTPRTGRGGYDPPPAPSGYTPEMERWQSRDRYSQDYKRDRYDGYGRSGGGQGSYHRERDRRPEKRRYPSGLPPHPYSSHYLPPNYYGLPNGAVPGLPPPSSVYRSDPRGYPVMPRDYPADYRRSDYERRTQT.

Positions 1-14 (MSQALNESANSIGS) are enriched in polar residues. The tract at residues 1–293 (MSQALNESAN…SEDEATDSED (293 aa)) is disordered. A compositionally biased stretch (low complexity) spans 39 to 56 (SGSDSDSDSSSGNSSDGR). Residues 114–128 (QRNQSINNANTSSSL) show a composition bias toward polar residues. Positions 159–172 (DSSANVSPTSSSSS) are enriched in low complexity. Positions 213–226 (SDESDESEDSDDEV) are enriched in acidic residues. A compositionally biased stretch (polar residues) spans 236–247 (ATTSRSKLAQQQ). Over residues 284 to 293 (SEDEATDSED) the composition is skewed to acidic residues. Chromo domains follow at residues 318–414 (ETIE…YWRR) and 439–501 (NNVD…TPSR). The Helicase ATP-binding domain maps to 540–710 (LHSWCKENSV…WALLHFIMPD (171 aa)). 553–560 (DEMGLGKT) lines the ATP pocket. The DEAH box motif lies at 661–664 (DEAH). The Helicase C-terminal domain occupies 840–991 (LLDKLLCRLK…HLVIQRMDTT (152 aa)). Disordered regions lie at residues 1074–1185 (FEEE…MKEK), 1246–1265 (HKEE…AKQR), 1390–1491 (TKGG…MHFT), 1599–1829 (KAGG…PYSS), and 1848–1883 (PPPS…RTQT). A compositionally biased stretch (acidic residues) spans 1091-1103 (GEEDDSKDWDDII). The segment covering 1106–1121 (GFRKAIDDQERAKEME) has biased composition (basic and acidic residues). The span at 1393–1402 (GQRRQRRPRA) shows a compositional bias: basic residues. Residues 1437 to 1451 (AESSNSQVDPSTASP) show a composition bias toward polar residues. Basic residues predominate over residues 1466–1476 (KAKKSKARSKK). The tract at residues 1505–1606 (LDPSIFNECK…KQKAGGDGEA (102 aa)) is CHD1 helical C-terminal domain (CHCT). The span at 1600–1612 (AGGDGEAKGKDKG) shows a compositional bias: basic and acidic residues. Residues 1613–1622 (SSGSPAKSKP) are compositionally biased toward low complexity. Residues 1627–1638 (TEEKEKERDRSG) show a composition bias toward basic and acidic residues. Residues 1724–1738 (YYGGSGPPMGSGSYE) show a composition bias toward gly residues. Polar residues predominate over residues 1742-1755 (NSRRQGPTSPSTPR). Composition is skewed to basic and acidic residues over residues 1773-1794 (EMER…RYDG), 1805-1817 (YHRE…EKRR), and 1868-1883 (YPAD…RTQT).

The protein belongs to the SNF2/RAD54 helicase family. Monomer. Component of the SAGA complex. Interacts with SSRP1.

Its subcellular location is the nucleus. It is found in the chromosome. It catalyses the reaction ATP + H2O = ADP + phosphate + H(+). Functionally, ATP-dependent chromatin-remodeling factor which functions as substrate recognition component of the transcription regulatory histone acetylation (HAT) complex SAGA. Regulates polymerase II transcription. Also required for efficient transcription by RNA polymerase I, and more specifically the polymerase I transcription termination step. Regulates negatively DNA replication. Not only involved in transcription-related chromatin remodeling, but also required to maintain a specific chromatin configuration across the genome. Involved in assembly of active chromatin. Required for maintaining open chromatin and pluripotency in embryonic stem cells and is important for wing development and fertility. Is essential for the incorporation of histone H3.3 and assembly of paternal chromatin. Required for replication-independent nucleosome assembly in the decondensing male pronucleus. The chain is Chromodomain-helicase-DNA-binding protein 1 (Chd1) from Drosophila melanogaster (Fruit fly).